The following is a 298-amino-acid chain: MLYQQIARNKRKTALIMVLFVVILTLVGAGLGYLFSNSPWTGIIIALAGSLIYLLIMWQNPANMIMSLNHAQEIQEADNPELWHIVEDMAMVARVPMPRVFIIPDPSPNAFATGRDPEHSAVAVTQGILELMNREELEGVLGHELSHVRNYDILLSTIGVVLVGVISFISGIASRYIWFFGGNRRDDEDRDTNAFEIIFKVIAIVFVLILGPISASLAQMALSRNREYLADASSVELTRNPQGLISALRKIEGSQPMRQADRSSAGLYIENPFHNHGLSHLFDTHPPTEDRIKRLEHM.

2 helical membrane-spanning segments follow: residues 15–35 (LIMV…GYLF) and 38–58 (SPWT…LIMW). H143 contacts Zn(2+). E144 is an active-site residue. Residue H147 participates in Zn(2+) binding. 2 helical membrane-spanning segments follow: residues 153–173 (ILLS…SGIA) and 197–217 (IIFK…SASL). Position 227 (E227) interacts with Zn(2+).

The protein belongs to the peptidase M48B family. Zn(2+) is required as a cofactor.

It is found in the cell membrane. This is Protease HtpX homolog from Lactobacillus acidophilus (strain ATCC 700396 / NCK56 / N2 / NCFM).